Here is a 233-residue protein sequence, read N- to C-terminus: Small ribosomal subunit protein uS3 (233 aa).

The 69-residue stretch at 39–107 (VRQYLNKELA…PAQINIAEVR (69 aa)) folds into the KH type-2 domain.

It belongs to the universal ribosomal protein uS3 family. In terms of assembly, part of the 30S ribosomal subunit. Forms a tight complex with proteins S10 and S14.

Functionally, binds the lower part of the 30S subunit head. Binds mRNA in the 70S ribosome, positioning it for translation. This Cronobacter sakazakii (strain ATCC BAA-894) (Enterobacter sakazakii) protein is Small ribosomal subunit protein uS3.